A 482-amino-acid polypeptide reads, in one-letter code: tRNA sulfurtransferase (482 aa).

In terms of domain architecture, THUMP spans 61 to 165 (LAIRDALTRI…DDRLLLIKGR (105 aa)). Residues 183-184 (LI), Lys265, Gly287, and Gln296 each bind ATP. An intrachain disulfide couples Cys344 to Cys456. Residues 404–482 (FGANDVILDI…GFANVKVYRP (79 aa)) enclose the Rhodanese domain. Cys456 acts as the Cysteine persulfide intermediate in catalysis.

Belongs to the ThiI family.

The protein resides in the cytoplasm. The catalysed reaction is [ThiI sulfur-carrier protein]-S-sulfanyl-L-cysteine + a uridine in tRNA + 2 reduced [2Fe-2S]-[ferredoxin] + ATP + H(+) = [ThiI sulfur-carrier protein]-L-cysteine + a 4-thiouridine in tRNA + 2 oxidized [2Fe-2S]-[ferredoxin] + AMP + diphosphate. It catalyses the reaction [ThiS sulfur-carrier protein]-C-terminal Gly-Gly-AMP + S-sulfanyl-L-cysteinyl-[cysteine desulfurase] + AH2 = [ThiS sulfur-carrier protein]-C-terminal-Gly-aminoethanethioate + L-cysteinyl-[cysteine desulfurase] + A + AMP + 2 H(+). The protein operates within cofactor biosynthesis; thiamine diphosphate biosynthesis. Functionally, catalyzes the ATP-dependent transfer of a sulfur to tRNA to produce 4-thiouridine in position 8 of tRNAs, which functions as a near-UV photosensor. Also catalyzes the transfer of sulfur to the sulfur carrier protein ThiS, forming ThiS-thiocarboxylate. This is a step in the synthesis of thiazole, in the thiamine biosynthesis pathway. The sulfur is donated as persulfide by IscS. This Salmonella typhi protein is tRNA sulfurtransferase.